A 446-amino-acid chain; its full sequence is MDRQKEFVLRTLEERDIRFVRLWFTDVLGYLKSVAIAPAELEGAFEEGIGFDGSSIEGFARVFESDTVARPDPSTFQVLPWKTSDGNHYSARMFCDITMPDGSPSWADSRHVLRRQLAKASDLGFTCYVHPEIEFFLLKPGPNDGTPPEPADNGGYFDQAVHDAAPNFRRHAIEALEQMGISVEFSHHEGAPGQQEIDLRYADALSMADNVMTFRYLVKEVALADGVRASFMPKPFAEHPGSAMHTHMSLFEGDTNAFHSPDDPLQLSDVAKSFIAGILEHANEISAVTNQWVNSYKRLVHGGEAPTAASWGAANRSALVRVPMYTPHKVSSRRVEVRSPDSACNPYLTFAVLLAAGLRGVEKGYVLGPQAEDNVWSLTQEERRAMGYRELPTSLGNALESMENSELVAEALGEHVFDYFLRNKRSEWENYRSHVTPYELKNYLSL.

A GS beta-grasp domain is found at 15-102 (RDIRFVRLWF…MFCDITMPDG (88 aa)). The 338-residue stretch at 109–446 (SRHVLRRQLA…PYELKNYLSL (338 aa)) folds into the GS catalytic domain. The Mg(2+) site is built by Glu132 and Glu134. Glu184 is an ATP binding site. Positions 189 and 196 each coordinate Mg(2+). Gly241 provides a ligand contact to L-glutamate. His245 lines the Mg(2+) pocket. ATP contacts are provided by residues 247–249 (HMS) and Ser249. L-glutamate-binding residues include Arg298, Glu304, and Arg316. The ATP site is built by Arg316 and Arg321. Glu336 lines the Mg(2+) pocket. Position 338 (Arg338) interacts with L-glutamate. An Isoglutamyl lysine isopeptide (Lys-Gln) (interchain with Q-Cter in protein Pup) cross-link involves residue Lys363.

The protein belongs to the glutamine synthetase family. As to quaternary structure, oligomer of 12 subunits arranged in the form of two hexagons. In its feedback-inhibited form, interacts with TnrA in order to block its DNA-binding activity. It depends on Mg(2+) as a cofactor.

It localises to the cytoplasm. It carries out the reaction L-glutamate + NH4(+) + ATP = L-glutamine + ADP + phosphate + H(+). Its activity is regulated as follows. Inhibited by glutamine. Functionally, glutamine synthetase (GS) is an unusual multitasking protein that functions as an enzyme, a transcription coregulator, and a chaperone in ammonium assimilation and in the regulation of genes involved in nitrogen metabolism. It catalyzes the ATP-dependent biosynthesis of glutamine from glutamate and ammonia. Feedback-inhibited GlnA also interacts with and regulates the activity of the transcriptional regulator TnrA. During nitrogen limitation, TnrA is in its DNA-binding active state and turns on the transcription of genes required for nitrogen assimilation. Under conditions of nitrogen excess, feedback-inhibited GlnA forms a stable complex with TnrA, which inhibits its DNA-binding activity. In contrast, feedback-inhibited GlnA acts as a chaperone to stabilize the DNA-binding activity of GlnR, which represses the transcription of nitrogen assimilation genes. The polypeptide is Glutamine synthetase (Mycolicibacterium smegmatis (strain ATCC 700084 / mc(2)155) (Mycobacterium smegmatis)).